The sequence spans 312 residues: MAAGVDCGDGVGARQHVFLVSEYLKDASKKMKNGLMFVKLVNPCSGEGAIYLFNMCLQQLFEVKVFKEKHHSWFINQSVQSGGLLHFATPVDPLFLLLHYLIKADKEGKFQPLDQVVVDNVFPNCILLLKLPGLEKLLHHVTEEKGNPEIDNKKYYKYSKEKTLKWLEKKVNQTVAALKTNNVNVSSRVQSTAFFSGDQASTDKEEDYIRYAHGLISDYIPKELSDDLSKYLKLPEPSASLPNPPSKKIKLSDEPVEAKEDYTKFNTKDLKTEKKNSKMTAAQKALAKVDKSGMKSIDTFFGVKNKKKIGKV.

A2 is modified (N-acetylalanine). The interval 236–256 (EPSASLPNPPSKKIKLSDEPV) is disordered. K295 carries the N6-acetyllysine modification. Residue S296 is modified to Phosphoserine.

Belongs to the RNase H2 subunit B family. In terms of assembly, the RNase H2 complex is a heterotrimer composed of the catalytic subunit RNASEH2A and the non-catalytic subunits RNASEH2B and RNASEH2C. Widely expressed.

It localises to the nucleus. Non catalytic subunit of RNase H2, an endonuclease that specifically degrades the RNA of RNA:DNA hybrids. Participates in DNA replication, possibly by mediating the removal of lagging-strand Okazaki fragment RNA primers during DNA replication. Mediates the excision of single ribonucleotides from DNA:RNA duplexes. This Homo sapiens (Human) protein is Ribonuclease H2 subunit B (RNASEH2B).